A 276-amino-acid polypeptide reads, in one-letter code: Undecaprenyl-diphosphatase (276 aa).

7 helical membrane-spanning segments follow: residues 12-34 (LGIVEGLTEFLPISSTGHLIVVG), 43-63 (TATAFKIIIQLGAILAVMWEF), 85-105 (FNLLLAFIPAVVFGLAFADLI), 108-128 (WLFNPITVATALIVGGIIMLW), 185-205 (TEFSFFLAMPTMIAATVYSLF), 218-238 (IFAIGFVSTFIVAMITVRALL), and 249-269 (FAWYRIAFGLVILATWQLHLI).

It belongs to the UppP family.

The protein resides in the cell inner membrane. The catalysed reaction is di-trans,octa-cis-undecaprenyl diphosphate + H2O = di-trans,octa-cis-undecaprenyl phosphate + phosphate + H(+). In terms of biological role, catalyzes the dephosphorylation of undecaprenyl diphosphate (UPP). Confers resistance to bacitracin. This is Undecaprenyl-diphosphatase from Ectopseudomonas mendocina (strain ymp) (Pseudomonas mendocina).